A 262-amino-acid chain; its full sequence is Snake venom serine proteinase 1 (262 aa).

A signal peptide spans 1–18; it reads MVLIRVLANLLILQLSYA. A propeptide spanning residues 19–24 is cleaved from the precursor; it reads QKSSEL. The 229-residue stretch at 25–253 folds into the Peptidase S1 domain; sequence VIGGDECNIN…HLDWIQSIIA (229 aa). Cystine bridges form between Cys-31-Cys-165, Cys-52-Cys-68, Cys-144-Cys-214, Cys-176-Cys-193, and Cys-204-Cys-229. His-67 serves as the catalytic Charge relay system. A glycan (N-linked (GlcNAc...) asparagine) is linked at Asn-105. The active-site Charge relay system is the Asp-112. Ser-208 serves as the catalytic Charge relay system.

It belongs to the peptidase S1 family. Snake venom subfamily. As to quaternary structure, monomer. As to expression, expressed by the venom gland.

The protein localises to the secreted. Snake venom serine protease that may act in the hemostasis system of the prey. The protein is Snake venom serine proteinase 1 of Crotalus adamanteus (Eastern diamondback rattlesnake).